Reading from the N-terminus, the 201-residue chain is Holliday junction branch migration complex subunit RuvA (201 aa).

The domain I stretch occupies residues 1 to 64; it reads MIGRLRGTLA…EDAQLLYGFA (64 aa). Residues 65 to 143 form a domain II region; sequence EKRERELFRE…AWESMPAIAT (79 aa). Positions 144–152 are flexible linker; it reads LVVEPGSKT. Residues 153 to 201 are domain III; it reads AVTSAENDAVSALISLGFKPQEASRAVSAIQEENLSSEEMIRRALKGMV.

This sequence belongs to the RuvA family. Homotetramer. Forms an RuvA(8)-RuvB(12)-Holliday junction (HJ) complex. HJ DNA is sandwiched between 2 RuvA tetramers; dsDNA enters through RuvA and exits via RuvB. An RuvB hexamer assembles on each DNA strand where it exits the tetramer. Each RuvB hexamer is contacted by two RuvA subunits (via domain III) on 2 adjacent RuvB subunits; this complex drives branch migration. In the full resolvosome a probable DNA-RuvA(4)-RuvB(12)-RuvC(2) complex forms which resolves the HJ.

It localises to the cytoplasm. Functionally, the RuvA-RuvB-RuvC complex processes Holliday junction (HJ) DNA during genetic recombination and DNA repair, while the RuvA-RuvB complex plays an important role in the rescue of blocked DNA replication forks via replication fork reversal (RFR). RuvA specifically binds to HJ cruciform DNA, conferring on it an open structure. The RuvB hexamer acts as an ATP-dependent pump, pulling dsDNA into and through the RuvAB complex. HJ branch migration allows RuvC to scan DNA until it finds its consensus sequence, where it cleaves and resolves the cruciform DNA. This chain is Holliday junction branch migration complex subunit RuvA, found in Stutzerimonas stutzeri (strain A1501) (Pseudomonas stutzeri).